The chain runs to 416 residues: Multifunctional CCA protein (416 aa).

ATP contacts are provided by glycine 8 and arginine 11. 2 residues coordinate CTP: glycine 8 and arginine 11. Mg(2+) is bound by residues aspartate 21 and aspartate 23. 3 residues coordinate ATP: arginine 91, arginine 137, and arginine 140. Residues arginine 91, arginine 137, and arginine 140 each coordinate CTP. Residues 228-335 (SFIHTMLVLK…ITLFNRFDVW (108 aa)) enclose the HD domain.

This sequence belongs to the tRNA nucleotidyltransferase/poly(A) polymerase family. Bacterial CCA-adding enzyme type 1 subfamily. As to quaternary structure, monomer. Can also form homodimers and oligomers. Requires Mg(2+) as cofactor. The cofactor is Ni(2+).

The catalysed reaction is a tRNA precursor + 2 CTP + ATP = a tRNA with a 3' CCA end + 3 diphosphate. It carries out the reaction a tRNA with a 3' CCA end + 2 CTP + ATP = a tRNA with a 3' CCACCA end + 3 diphosphate. Its function is as follows. Catalyzes the addition and repair of the essential 3'-terminal CCA sequence in tRNAs without using a nucleic acid template. Adds these three nucleotides in the order of C, C, and A to the tRNA nucleotide-73, using CTP and ATP as substrates and producing inorganic pyrophosphate. tRNA 3'-terminal CCA addition is required both for tRNA processing and repair. Also involved in tRNA surveillance by mediating tandem CCA addition to generate a CCACCA at the 3' terminus of unstable tRNAs. While stable tRNAs receive only 3'-terminal CCA, unstable tRNAs are marked with CCACCA and rapidly degraded. The protein is Multifunctional CCA protein of Haemophilus influenzae (strain PittGG).